Consider the following 252-residue polypeptide: MRKKVIAGNWKMNKVLSEAGEFMNSVVPKAPKGNDVEAIVCAPFPFLSKLVEQAKGSEVKVAAQNMHFEDSGAFTGEVSPVMLKDLGVTHVVLGHSERRELFAETNELVNKKTKAAFAHDLTPIVCVGETLDQREANETMNIVGEQVKQAVAGLTNEQVAETIIAYEPVWAIGTGKTATSEQANEVCTEIRKVVAEVTSADVAEKVIIQYGGSVKPANVDELLAQSDIDGALVGGASLDPESFLQLVEAGTK.

9 to 11 (NWK) contributes to the substrate binding site. The Electrophile role is filled by histidine 95. Catalysis depends on glutamate 167, which acts as the Proton acceptor. Residues glycine 173, serine 213, and 234-235 (GG) contribute to the substrate site. Phosphoserine is present on serine 213.

Belongs to the triosephosphate isomerase family. Homodimer.

The protein localises to the cytoplasm. It carries out the reaction D-glyceraldehyde 3-phosphate = dihydroxyacetone phosphate. It participates in carbohydrate biosynthesis; gluconeogenesis. It functions in the pathway carbohydrate degradation; glycolysis; D-glyceraldehyde 3-phosphate from glycerone phosphate: step 1/1. In terms of biological role, involved in the gluconeogenesis. Catalyzes stereospecifically the conversion of dihydroxyacetone phosphate (DHAP) to D-glyceraldehyde-3-phosphate (G3P). The sequence is that of Triosephosphate isomerase from Oceanobacillus iheyensis (strain DSM 14371 / CIP 107618 / JCM 11309 / KCTC 3954 / HTE831).